Consider the following 432-residue polypeptide: Trigger factor (432 aa).

One can recognise a PPIase FKBP-type domain in the interval 161–246; the sequence is EDRVVIDFVG…LKKVEVMVLP (86 aa).

Belongs to the FKBP-type PPIase family. Tig subfamily.

It is found in the cytoplasm. It carries out the reaction [protein]-peptidylproline (omega=180) = [protein]-peptidylproline (omega=0). In terms of biological role, involved in protein export. Acts as a chaperone by maintaining the newly synthesized protein in an open conformation. Functions as a peptidyl-prolyl cis-trans isomerase. This is Trigger factor (tig) from Pasteurella multocida (strain Pm70).